Here is a 252-residue protein sequence, read N- to C-terminus: Receptor expression-enhancing protein 3-B (252 aa).

A run of 3 helical transmembrane segments spans residues 1-21, 35-55, and 57-77; these read MVSG…YPAY, YVRW…ETIA, and LTVS…VWLL. The tract at residues 163–225 is disordered; sequence ETAETRFFPD…GLRRSQSMRS (63 aa). The span at 198–211 shows a compositional bias: acidic residues; sequence RTDEDVEVNSEDEV.

It belongs to the DP1 family.

The protein localises to the endoplasmic reticulum membrane. Functionally, microtubule-binding protein required to ensure proper cell division and nuclear envelope reassembly by sequestering the endoplasmic reticulum away from chromosomes during mitosis. Probably acts by clearing the endoplasmic reticulum membrane from metaphase chromosomes. The polypeptide is Receptor expression-enhancing protein 3-B (reep3-b) (Xenopus laevis (African clawed frog)).